Consider the following 574-residue polypeptide: Septation ring formation regulator EzrA (574 aa).

At 1-7 the chain is on the extracellular side; sequence MSSGIVL. The chain crosses the membrane as a helical span at residues 8 to 26; it reads LIVAIVLVVIIAYLIAIII. At 27–574 the chain is on the cytoplasmic side; it reads RKRNDSLITK…YEKTRETIRF (548 aa). Coiled coils occupy residues 102 to 141, 255 to 368, and 409 to 495; these read NFIRAHSQINNIESQLNLAEEDIKAIREALAVLKEQEEKN, KNIE…KDVL, and LKNI…EETA.

It belongs to the EzrA family.

Its subcellular location is the cell membrane. Negative regulator of FtsZ ring formation; modulates the frequency and position of FtsZ ring formation. Inhibits FtsZ ring formation at polar sites. Interacts either with FtsZ or with one of its binding partners to promote depolymerization. The polypeptide is Septation ring formation regulator EzrA (Streptococcus mutans serotype c (strain ATCC 700610 / UA159)).